A 1196-amino-acid polypeptide reads, in one-letter code: Jouberin (1196 aa).

Residues 13–45 (KVRFEELLKTHSDLMREKKKLKKKLVRSEENIS) are a coiled coil. A Phosphoserine modification is found at Ser45. Disordered stretches follow at residues 56 to 186 (MKET…EEDE), 215 to 242 (QLTYFPSDTLFHDDKLSSEKRKKKKEVP), and 254 to 327 (ISGD…HEIT). Positions 80 to 91 (DDVSAANTNNLK) are enriched in polar residues. Residues 92 to 101 (KSTRVTKNKL) are compositionally biased toward basic residues. A compositionally biased stretch (polar residues) spans 102 to 113 (RNTQLATENPNG). 3 stretches are compositionally biased toward basic and acidic residues: residues 141–154 (LKPETPENKVDSTH), 166–179 (DHQKSEKANEGREE), and 224–233 (LFHDDKLSSE). Residues 141–434 (LKPETPENKV…VFNENFPYLL (294 aa)) form an interaction with HAP1 region. Positions 300 to 309 (KPKKTKKKTK) are enriched in basic residues. WD repeat units follow at residues 607-649 (AGER…FMRE), 652-691 (GHLNIIYDLSWSKDDHYILTSSSDGTARIWKNEINNTNTF), 695-735 (PHPS…DSAI), 742-781 (VHKSFINSLCFDTEGHHMYSGDCTGVIVVWNTYVKINDLE), 797-837 (EFKG…ARKF), 841-880 (ANYREKIHSTLTPCGTFLFAGSEDGIVYVWNPETGEQVAM), and 885-926 (PFKS…AQQE). Residue Ser1002 is modified to Phosphoserine. The region spanning 1051–1111 (DTAPTVVALY…PANHVASETL (61 aa)) is the SH3 domain. Residues 1115–1196 (LPPEIKERSP…QAGRKVTLIE (82 aa)) are disordered. Basic and acidic residues-rich tracts occupy residues 1117-1136 (PEIKERSPPLSPEEKTKIEK) and 1161-1182 (THSEMRKEQSHEDQGHIMDTRM). Ser1123 bears the Phosphoserine mark.

In terms of assembly, self-associates. Part of the tectonic-like complex (also named B9 complex). Interacts with MKS1. Interacts with NPHP1; probably as heterodimers and/or AHI1(2):NPHP1(2) heterotetramers. Interacts (via SH3 domain) with the dynamin GTPase DNM2. Interacts with HAP1; probably as AHI1(2):HAP1(2) heterotetramers. Interacts with RAB8A. Interacts with CEND1. Interacts with CTNNB1/beta-catenin. Interacts with SPATA7. In terms of tissue distribution, highly expressed in the most primitive normal hematopoietic cells. Expressed in brain, particularly in neurons that give rise to the crossing axons of the corticospinal tract and superior cerebellar peduncles. Expressed in kidney (renal collecting duct cells) (at protein level).

The protein localises to the cytoplasm. It is found in the cytoskeleton. The protein resides in the cilium basal body. It localises to the cell junction. Its subcellular location is the adherens junction. The protein localises to the microtubule organizing center. It is found in the centrosome. The protein resides in the centriole. In terms of biological role, involved in vesicle trafficking and required for ciliogenesis, formation of primary non-motile cilium, and recruitment of RAB8A to the basal body of primary cilium. Component of the tectonic-like complex, a complex localized at the transition zone of primary cilia and acting as a barrier that prevents diffusion of transmembrane proteins between the cilia and plasma membranes. Involved in neuronal differentiation. As a positive modulator of classical Wnt signaling, may play a crucial role in ciliary signaling during cerebellum embryonic development. The chain is Jouberin (AHI1) from Homo sapiens (Human).